A 436-amino-acid chain; its full sequence is Tol-Pal system protein TolB (436 aa).

The N-terminal stretch at 1-28 (MRSFLKPLLTIAAMALGMTAVIPMPAWA) is a signal peptide.

The protein belongs to the TolB family. The Tol-Pal system is composed of five core proteins: the inner membrane proteins TolA, TolQ and TolR, the periplasmic protein TolB and the outer membrane protein Pal. They form a network linking the inner and outer membranes and the peptidoglycan layer.

The protein resides in the periplasm. Its function is as follows. Part of the Tol-Pal system, which plays a role in outer membrane invagination during cell division and is important for maintaining outer membrane integrity. The chain is Tol-Pal system protein TolB from Mesorhizobium japonicum (strain LMG 29417 / CECT 9101 / MAFF 303099) (Mesorhizobium loti (strain MAFF 303099)).